We begin with the raw amino-acid sequence, 102 residues long: NADH-quinone oxidoreductase subunit K (102 aa).

3 helical membrane passes run 6–26 (LEHGLAVAGILFCLGLVGLMV), 30–50 (ILFVLMSLEVMMNASALAFIV), and 62–82 (VMFILVISLAAAEASIGLAIL).

Belongs to the complex I subunit 4L family. In terms of assembly, NDH-1 is composed of 13 different subunits. Subunits NuoA, H, J, K, L, M, N constitute the membrane sector of the complex.

The protein resides in the cell inner membrane. It catalyses the reaction a quinone + NADH + 5 H(+)(in) = a quinol + NAD(+) + 4 H(+)(out). NDH-1 shuttles electrons from NADH, via FMN and iron-sulfur (Fe-S) centers, to quinones in the respiratory chain. The immediate electron acceptor for the enzyme in this species is believed to be ubiquinone. Couples the redox reaction to proton translocation (for every two electrons transferred, four hydrogen ions are translocated across the cytoplasmic membrane), and thus conserves the redox energy in a proton gradient. In Pseudomonas putida (strain W619), this protein is NADH-quinone oxidoreductase subunit K.